A 330-amino-acid polypeptide reads, in one-letter code: PDZ and LIM domain protein 4 (330 aa).

Residues 1–84 enclose the PDZ domain; the sequence is MTHAVTLRGP…HLTLSVSRPE (84 aa). Disordered stretches follow at residues 104–154 and 219–239; these read DPEA…NEVT and EAGE…KPAA. Phosphoserine occurs at positions 111, 115, 118, 119, 124, and 134. Over residues 111–122 the composition is skewed to polar residues; the sequence is SPATSRRSSISG. In terms of domain architecture, LIM zinc-binding spans 255–305; the sequence is CTRCGHGIVGTIVKARDKLYHPECFMCSDCGLNLKQRGYFFLDERLYCENH.

In terms of assembly, homodimer. Interacts (via C-terminus only or via combined C-terminus and LIM domain, but not LIM domain only) with PTPN13 (via the second or fourth PDZ domains). Found in a complex with PTPN13 and TRIP6. Interacts (via PDZ domain) with ACTN1 and ACTN2 (via C-terminal SDL residues). Interacts (via PDZ domain) with TRIP6 (via the second LIM domain or via the third LIM domain plus C-terminus). Interacts (via LIM domain) with GRIA1 (via C-terminus); this interaction as well as the interaction with alpha-actinin is required for their colocalization in early endosomes. Interacts with PDLIM1. Forms (via LIM domain) a heterodimer with PDLIM3. Interacts directly with SRC (via kinase domain and to a lesser extent the SH2 domain). Post-translationally, phosphorylated on tyrosine residue(s). Can be dephosphorylated by PTPN13. Detected in several tissues, most prominent in brain and heart of adults. Expressed in embryonic fibroblasts.

Its subcellular location is the cytoplasm. It is found in the cytoskeleton. The protein resides in the cell projection. The protein localises to the dendritic spine. It localises to the early endosome membrane. Its subcellular location is the recycling endosome membrane. It is found in the nucleus. The protein resides in the perinuclear region. The protein localises to the lamellipodium. It localises to the synapse. Its subcellular location is the synaptosome. In terms of biological role, suppresses SRC activation by recognizing and binding to active SRC and facilitating PTPN13-mediated dephosphorylation of SRC 'Tyr-419' leading to its inactivation. Inactivated SRC dissociates from this protein allowing the initiation of a new SRC inactivation cycle. Involved in reorganization of the actin cytoskeleton. In nonmuscle cells, binds to ACTN1 (alpha-actinin-1), increases the affinity of ACTN1 to F-actin (filamentous actin), and promotes formation of actin stress fibers. Involved in regulation of the synaptic AMPA receptor transport in dendritic spines of hippocampal pyramidal neurons directing the receptors toward an insertion at the postsynaptic membrane. Links endosomal surface-internalized GRIA1-containing AMPA receptors to the alpha-actinin/actin cytoskeleton. Increases AMPA receptor-mediated excitatory postsynaptic currents in neurons. This Rattus norvegicus (Rat) protein is PDZ and LIM domain protein 4 (Pdlim4).